We begin with the raw amino-acid sequence, 98 residues long: Putative protein adenylyltransferase MJ0128 (98 aa).

The GSX(10)DXD motif motif lies at 31–45 (GSYARNEQTEKSDID). Asp43, Asp45, and Asp75 together coordinate Mg(2+).

This sequence belongs to the MntA antitoxin family. Probably forms a complex with cognate toxin MJ0127. Requires Mg(2+) as cofactor.

The enzyme catalyses L-tyrosyl-[protein] + ATP = O-(5'-adenylyl)-L-tyrosyl-[protein] + diphosphate. The catalysed reaction is O-(5'-adenylyl)-L-tyrosyl-[protein] + ATP = O-[5'-(adenylyl-(5'-&gt;3')-adenylyl)]-L-tyrosyl-[protein] + diphosphate. Probable antitoxin component of a putative type VII toxin-antitoxin (TA) system. Neutralizes cognate toxic MJ0127 by di-AMPylation. The polypeptide is Putative protein adenylyltransferase MJ0128 (Methanocaldococcus jannaschii (strain ATCC 43067 / DSM 2661 / JAL-1 / JCM 10045 / NBRC 100440) (Methanococcus jannaschii)).